The primary structure comprises 195 residues: 3-isopropylmalate dehydratase small subunit (195 aa).

It belongs to the LeuD family. LeuD type 1 subfamily. As to quaternary structure, heterodimer of LeuC and LeuD.

The enzyme catalyses (2R,3S)-3-isopropylmalate = (2S)-2-isopropylmalate. It functions in the pathway amino-acid biosynthesis; L-leucine biosynthesis; L-leucine from 3-methyl-2-oxobutanoate: step 2/4. Functionally, catalyzes the isomerization between 2-isopropylmalate and 3-isopropylmalate, via the formation of 2-isopropylmaleate. The chain is 3-isopropylmalate dehydratase small subunit from Salinispora arenicola (strain CNS-205).